A 249-amino-acid polypeptide reads, in one-letter code: MLDVLNTINFLPLAELEVGQHFYWELGSFKIHGQILLTSWFVIALILLAAFISSLNVQRIPSGMQNFMESVLEFIRSLTKDQIGEKDYRPWVPFIGTLFLFIFVSNWSGALVPWKVIELPSGELAAPTSDINTTVALALLTSIAYFYAGISKKGLGYFAGYAEPVPFMVPFKIIEDFTKPLSLSFRLFGNILADELVVGVLVLLVPLFIPLPLMVLGLFLSAIQALIFATLAANYIGEALEEHGAEDHD.

Helical transmembrane passes span 35–55 (ILLTSWFVIALILLAAFISSL), 92–112 (VPFIGTLFLFIFVSNWSGALV), 131–151 (INTTVALALLTSIAYFYAGIS), 187–209 (LFGNILADELVVGVLVLLVPLFI), and 221–241 (SAIQALIFATLAANYIGEALE).

The protein belongs to the ATPase A chain family. As to quaternary structure, F-type ATPases have 2 components, CF(1) - the catalytic core - and CF(0) - the membrane proton channel. CF(1) has five subunits: alpha(3), beta(3), gamma(1), delta(1), epsilon(1). CF(0) has four main subunits: a, b, b' and c.

The protein resides in the cellular thylakoid membrane. Its function is as follows. Key component of the proton channel; it plays a direct role in the translocation of protons across the membrane. This chain is ATP synthase subunit a, found in Trichodesmium erythraeum (strain IMS101).